We begin with the raw amino-acid sequence, 320 residues long: Aspartate carbamoyltransferase catalytic subunit (320 aa).

2 residues coordinate carbamoyl phosphate: R68 and T69. K96 lines the L-aspartate pocket. Carbamoyl phosphate contacts are provided by R118, H148, and Q151. 2 residues coordinate L-aspartate: R181 and R236. The carbamoyl phosphate site is built by G277 and P278.

Belongs to the aspartate/ornithine carbamoyltransferase superfamily. ATCase family. As to quaternary structure, heterododecamer (2C3:3R2) of six catalytic PyrB chains organized as two trimers (C3), and six regulatory PyrI chains organized as three dimers (R2).

It carries out the reaction carbamoyl phosphate + L-aspartate = N-carbamoyl-L-aspartate + phosphate + H(+). The protein operates within pyrimidine metabolism; UMP biosynthesis via de novo pathway; (S)-dihydroorotate from bicarbonate: step 2/3. In terms of biological role, catalyzes the condensation of carbamoyl phosphate and aspartate to form carbamoyl aspartate and inorganic phosphate, the committed step in the de novo pyrimidine nucleotide biosynthesis pathway. This chain is Aspartate carbamoyltransferase catalytic subunit, found in Polaromonas sp. (strain JS666 / ATCC BAA-500).